The following is an 85-amino-acid chain: Sodium channel neurotoxin MeuNaTxalpha-1 (85 aa).

The N-terminal stretch at 1–19 (MNSLVMISLALLVMTGVES) is a signal peptide. In terms of domain architecture, LCN-type CS-alpha/beta spans 21 to 83 (RDGYIADDKN…VPIKVSGKCN (63 aa)). A specificity module, loop 1 region spans residues 27–31 (DDKNC). Disulfide bonds link Cys31/Cys82, Cys35/Cys55, Cys41/Cys65, and Cys45/Cys67. Specificity module, loop regions lie at residues 58 to 62 (AGQYG) and 75 to 83 (PIKVSGKCN). Asn83 is subject to Asparagine amide.

Belongs to the long (4 C-C) scorpion toxin superfamily. Sodium channel inhibitor family. Alpha subfamily. Post-translationally, C-terminal amidation does not appear to play an important role in activity, since the non-amidated recombinant toxin and the native toxin (which is amidated) show similar activities on all sodium channels tested. Expressed by the venom gland.

The protein resides in the secreted. Its function is as follows. Alpha toxins bind voltage-independently at site-3 of sodium channels (Nav) and inhibit the inactivation of the activated channels, thereby blocking neuronal transmission. This toxin inhibits inactivation of Nav1.6/SCN8A (EC(50)=3.1 uM) and drosophila DmNav1 (EC(50)=1.17 uM). It also shows a weak inhibition of inactivation on Nav1.2/SCN2A Nav1.3/SCN3A, and Nav1.7/SCN9A. The toxin (1 uM) does not significantly shift the midpoint of activation at the two channels, but induces a significant depolarizing shift in the V(1/2) of inactivation of the channels. The toxin has also been shown to dose-dependently stimulates intracellular signaling in DRG neurons through activation of two kinases (type II protein kinase A (PKA-II) and MAP kinases 1/3 (MAPK1/MAPK3)). Nav1.2/SCN2A is strongly suggested to be the target channel predominantly involved in this activation. In vivo, the toxin induces a dose-dependent thermal hyperalgesia lasting 30-45 minutes. This is Sodium channel neurotoxin MeuNaTxalpha-1 from Mesobuthus eupeus (Lesser Asian scorpion).